Reading from the N-terminus, the 80-residue chain is U-scoloptoxin(15)-Er1a (80 aa).

An N-terminal signal peptide occupies residues 1 to 22; the sequence is MQNKGVVLTLFLVVSMAIVISS.

The protein belongs to the scoloptoxin-15 family. Post-translationally, contains 2 disulfide bonds. As to expression, expressed by the venom gland.

It is found in the secreted. This is U-scoloptoxin(15)-Er1a from Ethmostigmus rubripes (Giant centipede).